A 316-amino-acid polypeptide reads, in one-letter code: 4-diphosphocytidyl-2-C-methyl-D-erythritol kinase (316 aa).

Residue Lys23 is part of the active site. Position 108 to 118 (108 to 118) interacts with ATP; the sequence is PVAGGMAGGSA. Residue Asp150 is part of the active site.

It belongs to the GHMP kinase family. IspE subfamily.

It catalyses the reaction 4-CDP-2-C-methyl-D-erythritol + ATP = 4-CDP-2-C-methyl-D-erythritol 2-phosphate + ADP + H(+). It functions in the pathway isoprenoid biosynthesis; isopentenyl diphosphate biosynthesis via DXP pathway; isopentenyl diphosphate from 1-deoxy-D-xylulose 5-phosphate: step 3/6. Functionally, catalyzes the phosphorylation of the position 2 hydroxy group of 4-diphosphocytidyl-2C-methyl-D-erythritol. This is 4-diphosphocytidyl-2-C-methyl-D-erythritol kinase from Mycobacterium avium (strain 104).